Consider the following 391-residue polypeptide: Heme A synthase (391 aa).

8 consecutive transmembrane segments (helical) span residues 37–57 (IRLW…VGGL), 121–141 (RQLG…FLAA), 152–172 (LLAL…MVAS), 186–206 (LATH…QALL), 229–249 (TTVL…VAGI), 298–318 (FLHR…WIFG), 332–352 (LLAM…LSAA), and 354–374 (WQVA…ILHA). Residue H300 participates in heme binding. H360 contributes to the heme binding site.

It belongs to the COX15/CtaA family. Type 2 subfamily. As to quaternary structure, interacts with CtaB. It depends on heme b as a cofactor.

The protein resides in the cell membrane. The catalysed reaction is Fe(II)-heme o + 2 A + H2O = Fe(II)-heme a + 2 AH2. It participates in porphyrin-containing compound metabolism; heme A biosynthesis; heme A from heme O: step 1/1. Catalyzes the conversion of heme O to heme A by two successive hydroxylations of the methyl group at C8. The first hydroxylation forms heme I, the second hydroxylation results in an unstable dihydroxymethyl group, which spontaneously dehydrates, resulting in the formyl group of heme A. The sequence is that of Heme A synthase from Cereibacter sphaeroides (strain KD131 / KCTC 12085) (Rhodobacter sphaeroides).